Consider the following 540-residue polypeptide: E3 ubiquitin-protein ligase rnf8-A (540 aa).

Residues 30–84 enclose the FHA domain; the sequence is VTLGRGLGVTYQLKPTLCPLMISRTHCLFKQNTGGEWTVTDNKSLNGVWRNKERL. The disordered stretch occupies residues 128 to 205; it reads LIRPLPDKTK…SGTESRLNDS (78 aa). Polar residues-rich tracts occupy residues 152–162 and 179–200; these read ASGNEGPSNFS and SSHT…GTES. The RING-type zinc-finger motif lies at 382-420; it reads CIICSEHFIEAVTLNCAHSFCSYCIKSWKKRKEECPICR. A disordered region spans residues 517 to 540; that stretch reads GTDELDSSDFESDDDEEEDSFLII. Over residues 519–540 the composition is skewed to acidic residues; sequence DELDSSDFESDDDEEEDSFLII.

Belongs to the RNF8 family. In terms of assembly, homodimer. Forms a E2-E3 ubiquitin ligase complex composed of the rnf8 homodimer and a E2 heterodimer of ube2n and ube2v2.

The protein localises to the nucleus. The enzyme catalyses S-ubiquitinyl-[E2 ubiquitin-conjugating enzyme]-L-cysteine + [acceptor protein]-L-lysine = [E2 ubiquitin-conjugating enzyme]-L-cysteine + N(6)-ubiquitinyl-[acceptor protein]-L-lysine.. It participates in protein modification; protein ubiquitination. E3 ubiquitin-protein ligase that plays a key role in DNA damage signaling via 2 distinct roles: by mediating the 'Lys-63'-linked ubiquitination of histones H2A and H2AX and promoting the recruitment of DNA repair proteins at double-strand breaks (DSBs) sites, and by catalyzing 'Lys-48'-linked ubiquitination to remove target proteins from DNA damage sites. Following DNA DSBs, it is recruited to the sites of damage by ATM-phosphorylated mdc1 and catalyzes the 'Lys-63'-linked ubiquitination of histones H2A and H2AX, thereby promoting the formation of tp53bp1 and brca1 ionizing radiation-induced foci (IRIF). H2A ubiquitination also mediates the ATM-dependent transcriptional silencing at regions flanking DSBs in cis, a mechanism to avoid collision between transcription and repair intermediates. Also catalyzes the formation of 'Lys-48'-linked polyubiquitin chains, leading to degradation of substrate proteins. In addition to its function in damage signaling, also plays a role in higher-order chromatin structure by mediating extensive chromatin decondensation. In Xenopus laevis (African clawed frog), this protein is E3 ubiquitin-protein ligase rnf8-A.